Consider the following 474-residue polypeptide: Glutamate--tRNA ligase (474 aa).

The 'HIGH' region motif lies at proline 9–glycine 19. Residues lysine 240–arginine 244 carry the 'KMSKS' region motif. Lysine 243 serves as a coordination point for ATP.

This sequence belongs to the class-I aminoacyl-tRNA synthetase family. Glutamate--tRNA ligase type 1 subfamily. Monomer.

The protein resides in the cytoplasm. It carries out the reaction tRNA(Glu) + L-glutamate + ATP = L-glutamyl-tRNA(Glu) + AMP + diphosphate. Its function is as follows. Catalyzes the attachment of glutamate to tRNA(Glu) in a two-step reaction: glutamate is first activated by ATP to form Glu-AMP and then transferred to the acceptor end of tRNA(Glu). This chain is Glutamate--tRNA ligase, found in Vibrio vulnificus (strain YJ016).